Consider the following 605-residue polypeptide: Copper resistance protein A (605 aa).

The tat-type signal signal peptide spans Met1–Ser41. Residues His100, His102, His142, and His144 each contribute to the Cu cation site. 3 repeat units span residues Asp382 to Met389, Asp414 to Met421, and Asp422 to Met429. Residues Asp382–Met429 form a 3 X 8 AA tandem repeats of D-H-X-X-M-X-G-M region. Residues His538, His541, His543, His586, Cys587, His588, His592, and Met597 each coordinate Cu cation.

This sequence belongs to the multicopper oxidase family. CopA subfamily. In terms of processing, predicted to be exported by the Tat system. The position of the signal peptide cleavage has not been experimentally proven.

The protein localises to the periplasm. Required for the copper-inducible expression of copper resistance. May have oxidase activity. The polypeptide is Copper resistance protein A (pcoA) (Escherichia coli).